The sequence spans 273 residues: Dermonecrotic toxin LhSicTox-alphaIA1iv (273 aa).

H5 is an active-site residue. Residues E25 and D27 each coordinate Mg(2+). The active-site Nucleophile is the H41. 2 disulfides stabilise this stretch: C45/C51 and C47/C190. Residue D85 coordinates Mg(2+).

Belongs to the arthropod phospholipase D family. Class II subfamily. Requires Mg(2+) as cofactor. As to expression, expressed by the venom gland.

The protein localises to the secreted. It catalyses the reaction an N-(acyl)-sphingosylphosphocholine = an N-(acyl)-sphingosyl-1,3-cyclic phosphate + choline. The enzyme catalyses an N-(acyl)-sphingosylphosphoethanolamine = an N-(acyl)-sphingosyl-1,3-cyclic phosphate + ethanolamine. The catalysed reaction is a 1-acyl-sn-glycero-3-phosphocholine = a 1-acyl-sn-glycero-2,3-cyclic phosphate + choline. It carries out the reaction a 1-acyl-sn-glycero-3-phosphoethanolamine = a 1-acyl-sn-glycero-2,3-cyclic phosphate + ethanolamine. Dermonecrotic toxins cleave the phosphodiester linkage between the phosphate and headgroup of certain phospholipids (sphingolipid and lysolipid substrates), forming an alcohol (often choline) and a cyclic phosphate. This toxin acts on sphingomyelin (SM). It may also act on ceramide phosphoethanolamine (CPE), lysophosphatidylcholine (LPC) and lysophosphatidylethanolamine (LPE), but not on lysophosphatidylserine (LPS), and lysophosphatidylglycerol (LPG). It acts by transphosphatidylation, releasing exclusively cyclic phosphate products as second products. Induces dermonecrosis, hemolysis, increased vascular permeability, edema, inflammatory response, and platelet aggregation. The protein is Dermonecrotic toxin LhSicTox-alphaIA1iv of Loxosceles hirsuta (Recluse spider).